The sequence spans 501 residues: Bifunctional pantoate ligase/cytidylate kinase (501 aa).

Residues 1–264 (MLSTQAELAA…CGTTRLIDHS (264 aa)) form a pantoate--beta-alanine ligase region. 25–32 (MGGLHQGH) provides a ligand contact to ATP. The active-site Proton donor is the His32. (R)-pantoate is bound at residue Gln55. Residue Gln55 coordinates beta-alanine. Residue 144 to 147 (GEKD) coordinates ATP. Gln150 contributes to the (R)-pantoate binding site. Residues Val173 and 181 to 184 (LSSR) contribute to the ATP site. The segment at 265–501 (FLMTRQPLVA…PEEAWPTPAG (237 aa)) is cytidylate kinase.

The protein in the N-terminal section; belongs to the pantothenate synthetase family. This sequence in the C-terminal section; belongs to the cytidylate kinase family. Type 1 subfamily.

It is found in the cytoplasm. It catalyses the reaction (R)-pantoate + beta-alanine + ATP = (R)-pantothenate + AMP + diphosphate + H(+). It carries out the reaction CMP + ATP = CDP + ADP. The enzyme catalyses dCMP + ATP = dCDP + ADP. It functions in the pathway cofactor biosynthesis; (R)-pantothenate biosynthesis; (R)-pantothenate from (R)-pantoate and beta-alanine: step 1/1. Functionally, catalyzes the condensation of pantoate with beta-alanine in an ATP-dependent reaction via a pantoyl-adenylate intermediate. Catalyzes the transfer of a phosphate group from ATP to either CMP or dCMP to form CDP or dCDP and ADP, respectively. In Parasynechococcus marenigrum (strain WH8102), this protein is Bifunctional pantoate ligase/cytidylate kinase.